Reading from the N-terminus, the 305-residue chain is Glycine--tRNA ligase alpha subunit (305 aa).

This sequence belongs to the class-II aminoacyl-tRNA synthetase family. In terms of assembly, tetramer of two alpha and two beta subunits.

The protein localises to the cytoplasm. The enzyme catalyses tRNA(Gly) + glycine + ATP = glycyl-tRNA(Gly) + AMP + diphosphate. This chain is Glycine--tRNA ligase alpha subunit, found in Streptococcus mutans serotype c (strain ATCC 700610 / UA159).